Reading from the N-terminus, the 255-residue chain is MAGHSKWANIKRQKARVDAKKGKTFTQLSRAIIVAARNGLPDPAANLQLRTAIEKAKAAGIPNDNIERAIAKGAGTYGNDENNLEEIRYEGYGPGGVAILIEALTDNRNRTAADLRAAFSKNGGNLGETGCVSWMFDQKGVVILEGKVEEEVLLDASVEGGADTYEIFDSDEEQGAEVFTEVSNLETLNQTLQEKGLPVKEAELRWIPNNSIEVTDPEQGRSLLKLMDALESLDDVQNVTANFDMADELIALTIA.

It belongs to the TACO1 family.

The protein resides in the cytoplasm. In Gloeothece citriformis (strain PCC 7424) (Cyanothece sp. (strain PCC 7424)), this protein is Probable transcriptional regulatory protein PCC7424_2775.